We begin with the raw amino-acid sequence, 2566 residues long: Zinc finger protein GLI1 (2566 aa).

Disordered regions lie at residues 349–375 (HHSSGYVPNHTAPMLRGGKKRSHSQSS), 430–508 (DIRR…RSTG), and 985–1046 (KSIE…GDPD). Polar residues-rich tracts occupy residues 434–444 (TLSSNGNSSHT) and 457–492 (WSPNSPHSSGSGFDNYQTSSHKSLPLPSTLQTYQQH). Over residues 493 to 508 (SGYTSTSGSSGNRSTG) the composition is skewed to low complexity. Residues 993 to 1016 (WQNQNVFSSRRNSTRDPSNNNNSG) are compositionally biased toward polar residues. Over residues 1023 to 1035 (DEPDVDDDEELDD) the composition is skewed to acidic residues. The segment at 1088–1110 (RECVRGTRPFKAQYMLVVHMRRH) adopts a C2H2-type 1; degenerate zinc-finger fold. 3 consecutive C2H2-type zinc fingers follow at residues 1116-1140 (HKCIFEGCIKRYSRLENLKTHLRSH), 1146-1171 (YQCEIPGCNKAFSNASDRAKHQNRTH), and 1177-1202 (YTCKVDGCSKRYTDPSSLRKHVKTVH). Disordered regions lie at residues 1254–1313 (GNSN…PRDS), 1465–1491 (LSTTSNPVQSLSPSIDNPINSTGTKQK), 1650–1677 (SKNMDNNSQTKNNNELNEENSPQSNQNE), 1727–1791 (AAAS…MDND), and 2067–2091 (MHFSPHSYVHSSSSNSSPFNSNRPH). Low complexity-rich tracts occupy residues 1661-1677 (NNNELNEENSPQSNQNE) and 1727-1743 (AAASSGIGSGVTTTTAS). Basic residues predominate over residues 1752–1769 (NHHHQKQQPKHSHQHQNR). A compositionally biased stretch (polar residues) spans 1770-1791 (TKSINSDNNYSNQDNVSTMDND). A compositionally biased stretch (low complexity) spans 2070 to 2090 (SPHSYVHSSSSNSSPFNSNRP).

It belongs to the GLI C2H2-type zinc-finger protein family. As to expression, expressed in female-paired or unpaired males along the ventral surface in neurons and skin tegument cells. In virgin and mature females, expressed bilaterally along the edges of the body in neurons. In mature females, also expressed in skin tegument cells.

It is found in the nucleus. Probable transcription factor which plays an essential role in males to trigger female sexual development by inducing NRPS expression in male. NRPS produces the pheromone beta-alanyl-tryptamine (BATT), which stimulates female sexual development. The chain is Zinc finger protein GLI1 from Schistosoma mansoni (Blood fluke).